The chain runs to 1394 residues: DNA-directed RNA polymerase subunit beta (1394 aa).

Belongs to the RNA polymerase beta chain family. The RNAP catalytic core consists of 2 alpha, 1 beta, 1 beta' and 1 omega subunit. When a sigma factor is associated with the core the holoenzyme is formed, which can initiate transcription.

It catalyses the reaction RNA(n) + a ribonucleoside 5'-triphosphate = RNA(n+1) + diphosphate. Functionally, DNA-dependent RNA polymerase catalyzes the transcription of DNA into RNA using the four ribonucleoside triphosphates as substrates. In Anaplasma phagocytophilum (Ehrlichia phagocytophila), this protein is DNA-directed RNA polymerase subunit beta.